Reading from the N-terminus, the 124-residue chain is uncharacterized protein (124 aa).

An N-terminal signal peptide occupies residues 1–21 (MFLLSLLHFFHPSLIPSLSLS).

This is an uncharacterized protein from Schizosaccharomyces pombe (strain 972 / ATCC 24843) (Fission yeast).